The following is a 77-amino-acid chain: uncharacterized protein (77 aa).

A helical membrane pass occupies residues 57-76 (NSAVICTLIANLMAFFMLLT).

The protein localises to the membrane. This is an uncharacterized protein from Schizosaccharomyces pombe (strain 972 / ATCC 24843) (Fission yeast).